Here is a 512-residue protein sequence, read N- to C-terminus: Glucose-1-phosphate adenylyltransferase small subunit 2, chloroplastic (512 aa).

The interval 1-21 (MAAIGVLKVPPSSSSSSSSSS) is disordered. The N-terminal 63 residues, 1–63 (MAAIGVLKVP…RNPFIVSPKA (63 aa)), are a transit peptide targeting the chloroplast. The segment covering 12–21 (SSSSSSSSSS) has biased composition (low complexity).

This sequence belongs to the bacterial/plant glucose-1-phosphate adenylyltransferase family. Heterotetramer. Leaves and seeds.

Its subcellular location is the plastid. The protein resides in the chloroplast. It catalyses the reaction alpha-D-glucose 1-phosphate + ATP + H(+) = ADP-alpha-D-glucose + diphosphate. It participates in glycan biosynthesis; starch biosynthesis. Its activity is regulated as follows. Activated by 3'phosphoglycerate, inhibited by orthophosphate. Allosteric regulation. Functionally, this protein plays a role in synthesis of starch. It catalyzes the synthesis of the activated glycosyl donor, ADP-glucose from Glc-1-P and ATP. The polypeptide is Glucose-1-phosphate adenylyltransferase small subunit 2, chloroplastic (AGPP) (Vicia faba (Broad bean)).